A 275-amino-acid chain; its full sequence is Nitrogenase iron protein 1 (275 aa).

9–16 (GKGGIGKS) contributes to the ATP binding site. C97 lines the [4Fe-4S] cluster pocket. R100 carries the post-translational modification ADP-ribosylarginine; by dinitrogenase reductase ADP-ribosyltransferase. A [4Fe-4S] cluster-binding site is contributed by C132.

The protein belongs to the NifH/BchL/ChlL family. Homodimer. [4Fe-4S] cluster is required as a cofactor. Post-translationally, the reversible ADP-ribosylation of Arg-100 inactivates the nitrogenase reductase and regulates nitrogenase activity.

It carries out the reaction N2 + 8 reduced [2Fe-2S]-[ferredoxin] + 16 ATP + 16 H2O = H2 + 8 oxidized [2Fe-2S]-[ferredoxin] + 2 NH4(+) + 16 ADP + 16 phosphate + 6 H(+). The key enzymatic reactions in nitrogen fixation are catalyzed by the nitrogenase complex, which has 2 components: the iron protein and the molybdenum-iron protein. This is Nitrogenase iron protein 1 (nifH1) from Methanosarcina barkeri.